Consider the following 139-residue polypeptide: Gastrula zinc finger protein XlCGF29.1 (139 aa).

5 consecutive C2H2-type zinc fingers follow at residues 6–28, 34–56, 62–84, 90–112, and 117–139; these read FTCT…LLIH, FDST…LSTH, FVCT…LHSH, FPCS…LRHH, and FPCT…QMIH.

This sequence belongs to the krueppel C2H2-type zinc-finger protein family.

It localises to the nucleus. Functionally, may be involved in transcriptional regulation. The chain is Gastrula zinc finger protein XlCGF29.1 from Xenopus laevis (African clawed frog).